The chain runs to 931 residues: Protein translocase subunit SecA (931 aa).

ATP contacts are provided by residues Gln-87, Gly-105–Thr-109, and Asp-515. The Zn(2+) site is built by Cys-915, Cys-917, Cys-926, and His-927.

This sequence belongs to the SecA family. Monomer and homodimer. Part of the essential Sec protein translocation apparatus which comprises SecA, SecYEG and auxiliary proteins SecDF-YajC and YidC. It depends on Zn(2+) as a cofactor.

It localises to the cell inner membrane. Its subcellular location is the cytoplasm. The catalysed reaction is ATP + H2O + cellular proteinSide 1 = ADP + phosphate + cellular proteinSide 2.. Functionally, part of the Sec protein translocase complex. Interacts with the SecYEG preprotein conducting channel. Has a central role in coupling the hydrolysis of ATP to the transfer of proteins into and across the cell membrane, serving both as a receptor for the preprotein-SecB complex and as an ATP-driven molecular motor driving the stepwise translocation of polypeptide chains across the membrane. This Burkholderia pseudomallei (strain 1106a) protein is Protein translocase subunit SecA.